The primary structure comprises 231 residues: DNA mismatch repair protein MutH (231 aa).

The protein belongs to the MutH family.

It localises to the cytoplasm. Sequence-specific endonuclease that cleaves unmethylated GATC sequences. It is involved in DNA mismatch repair. This is DNA mismatch repair protein MutH from Pectobacterium atrosepticum (strain SCRI 1043 / ATCC BAA-672) (Erwinia carotovora subsp. atroseptica).